Consider the following 313-residue polypeptide: Serine/threonine-protein phosphatase PP2A-3 catalytic subunit (313 aa).

Mn(2+) contacts are provided by aspartate 61, histidine 63, aspartate 89, and asparagine 121. Histidine 122 (proton donor) is an active-site residue. Positions 171 and 245 each coordinate Mn(2+). The residue at position 313 (leucine 313) is a Leucine methyl ester.

Belongs to the PPP phosphatase family. PP-2A subfamily. As to quaternary structure, PP2A consists of a common heterodimeric core enzyme, composed of a 36 kDa catalytic subunit (subunit C) and a 65 kDa constant regulatory subunit (subunit A), that associates with a variety of regulatory subunits such as subunits B (the R2/B/PR55/B55, R3/B''/PR72/PR130/PR59 and R5/B'/B56 families). Interacts with ACR4. Interacts with TAP46. Interacts with SIC/RON3. Mn(2+) serves as cofactor. Post-translationally, reversibly methyl esterified on Leu-313 by leucine carboxyl methyltransferase 1 (LCMT1) and pectin methylesterase 1 (PME1). Carboxyl methylation influences the affinity of the catalytic subunit for the different regulatory subunits, thereby modulating the PP2A holoenzyme's substrate specificity, enzyme activity and cellular localization. Phosphorylation of either threonine (by autophosphorylation-activated protein kinase) or tyrosine results in inactivation of the phosphatase. Auto-dephosphorylation has been suggested as a mechanism for reactivation.

The protein resides in the cytoplasm. The enzyme catalyses O-phospho-L-seryl-[protein] + H2O = L-seryl-[protein] + phosphate. The catalysed reaction is O-phospho-L-threonyl-[protein] + H2O = L-threonyl-[protein] + phosphate. Its function is as follows. Functions redundantly with PP2A4, and is involved in establishing auxin gradients, apical-basal axis of polarity and root and shoot apical meristem during embryogenesis. May dephosphorylate PIN1 and regulate its subcellular distribution for polar auxin transport. Involved in the regulation of formative cell division in roots by dephosphorylating ACR4 protein kinase. This Arabidopsis thaliana (Mouse-ear cress) protein is Serine/threonine-protein phosphatase PP2A-3 catalytic subunit.